A 21-amino-acid chain; its full sequence is uncharacterized protein (21 aa).

This is an uncharacterized protein from Haemophilus influenzae (strain ATCC 51907 / DSM 11121 / KW20 / Rd).